Consider the following 347-residue polypeptide: GMP reductase (347 aa).

108–131 (ADFEKTKQILDLNPALNFVCIDVA) is an NADP(+) binding site. K(+)-binding residues include Gly-181 and Gly-183. The active-site Thioimidate intermediate is the Cys-186. An NADP(+)-binding site is contributed by 216–239 (IVSDGGCTTPGDVAKAFGGGADFV).

It belongs to the IMPDH/GMPR family. GuaC type 1 subfamily. Homotetramer.

It catalyses the reaction IMP + NH4(+) + NADP(+) = GMP + NADPH + 2 H(+). In terms of biological role, catalyzes the irreversible NADPH-dependent deamination of GMP to IMP. It functions in the conversion of nucleobase, nucleoside and nucleotide derivatives of G to A nucleotides, and in maintaining the intracellular balance of A and G nucleotides. The protein is GMP reductase of Escherichia coli O7:K1 (strain IAI39 / ExPEC).